Reading from the N-terminus, the 371-residue chain is Transaldolase (371 aa).

Catalysis depends on K140, which acts as the Schiff-base intermediate with substrate.

Belongs to the transaldolase family. Type 2 subfamily.

The protein resides in the cytoplasm. It carries out the reaction D-sedoheptulose 7-phosphate + D-glyceraldehyde 3-phosphate = D-erythrose 4-phosphate + beta-D-fructose 6-phosphate. It functions in the pathway carbohydrate degradation; pentose phosphate pathway; D-glyceraldehyde 3-phosphate and beta-D-fructose 6-phosphate from D-ribose 5-phosphate and D-xylulose 5-phosphate (non-oxidative stage): step 2/3. Its function is as follows. Transaldolase is important for the balance of metabolites in the pentose-phosphate pathway. This is Transaldolase from Arthrobacter sp. (strain FB24).